The primary structure comprises 435 residues: GPI-anchor transamidase component PIGU (435 aa).

Over 2–3 (AA) the chain is Cytoplasmic. A helical membrane pass occupies residues 4–22 (PLVLVLVVAVTVRAALFRS). At 23–78 (SLAEFISERVEVVSPLSSWKRVVEGLSLLDLGVSPYSGAVFHETPLIIYLFHFLID) the chain is on the lumenal side. Residues 79–99 (YAELVFMITDALTAIALYFAI) traverse the membrane as a helical segment. Residues 100-136 (QDFNKVVFKKQKLLLELDQYAPDVAELIRTPMEMRYI) are Cytoplasmic-facing. A run of 4 helical transmembrane segments spans residues 137-158 (PLKV…VAKS), 159-178 (TCAI…IKGS), 179-194 (AFLS…YQSL), and 195-205 (YPLTLFVPGLL). Residues 206–222 (YLLQRQYIPVKMKSKAF) are Cytoplasmic-facing. Residues Lys-216 and Met-217 each contribute to the a cardiolipin site. The chain crosses the membrane as a helical span at residues 223–244 (WIFSWEYAMMYVGSLVVIICLS). Topologically, residues 245–286 (FFLLSSWDFIPAVYGFILSVPDLTPNIGLFWYFFAEMFEHFS) are lumenal. A helical transmembrane segment spans residues 287–306 (LFFVCVFQINVFFYTIPLAI). The Cytoplasmic segment spans residues 307 to 311 (KLKEH). Lys-309 lines the a cardiolipin pocket. The next 2 membrane-spanning stretches (helical) occupy residues 312-331 (PIFF…SYPT) and 332-345 (VGDV…FPVW). Over 346 to 354 (NHLYRFLRN) the chain is Cytoplasmic. A helical transmembrane segment spans residues 355 to 372 (IFVLTCIIIVCSLLFPVL). At 373 to 384 (WHLWIYAGSANS) the chain is on the lumenal side. Asn-383 and Asn-385 together coordinate a 2-acyl-6-[6-phosphoethanolamine-alpha-D-mannosyl-(1-&gt;2)-6-phosphoethanolamine-alpha-D-mannosyl-(1-&gt;6)-2-phosphoethanolamine-alpha-D-mannosyl-(1-&gt;4)-alpha-D-glucosaminyl]-1-(1-radyl,2-acyl-sn-glycero-3-phospho)-1D-myo-inositol. Residues 385-406 (NFFYAITLTFNVGQILLISDYF) traverse the membrane as a helical segment. At 407–435 (YAFLRREYYLTHGLYLTAKDGTEAMLVLK) the chain is on the cytoplasmic side.

This sequence belongs to the PIGU family. As to quaternary structure, heteropentamer. Part of the GPI-anchor transamidase complex, consisting of PIGK, PIGT, PIGS, PIGU and GAA1.

It is found in the endoplasmic reticulum membrane. It functions in the pathway glycolipid biosynthesis; glycosylphosphatidylinositol-anchor biosynthesis. In terms of biological role, component of the glycosylphosphatidylinositol-anchor (GPI-anchor) transamidase (GPI-T) complex that catalyzes the formation of the linkage between a proprotein and a GPI-anchor and participates in GPI anchored protein biosynthesis. Binds the lipid portion of GPI-anchor. May act as an organizer in the transmembrane layer to recruit other subunits, and thus is essential for assembly of the complex. In Homo sapiens (Human), this protein is GPI-anchor transamidase component PIGU.